We begin with the raw amino-acid sequence, 248 residues long: Ribosomal RNA small subunit methyltransferase J (248 aa).

S-adenosyl-L-methionine contacts are provided by residues Arg101–Asp102, Glu117–Arg118, Ser153–Ser154, and Asp171.

It belongs to the methyltransferase superfamily. RsmJ family.

Its subcellular location is the cytoplasm. The catalysed reaction is guanosine(1516) in 16S rRNA + S-adenosyl-L-methionine = N(2)-methylguanosine(1516) in 16S rRNA + S-adenosyl-L-homocysteine + H(+). In terms of biological role, specifically methylates the guanosine in position 1516 of 16S rRNA. This chain is Ribosomal RNA small subunit methyltransferase J, found in Proteus mirabilis (strain HI4320).